A 492-amino-acid polypeptide reads, in one-letter code: Asparagine--tRNA ligase, mitochondrial (492 aa).

Belongs to the class-II aminoacyl-tRNA synthetase family.

The protein localises to the mitochondrion matrix. The catalysed reaction is tRNA(Asn) + L-asparagine + ATP = L-asparaginyl-tRNA(Asn) + AMP + diphosphate + H(+). Catalyzes the attachment of asparagine to tRNA(Asn) in the mitochondrion. This chain is Asparagine--tRNA ligase, mitochondrial (SLM5), found in Saccharomyces cerevisiae (strain ATCC 204508 / S288c) (Baker's yeast).